The primary structure comprises 138 residues: Large ribosomal subunit protein uL16 (138 aa).

This sequence belongs to the universal ribosomal protein uL16 family. Part of the 50S ribosomal subunit.

Its function is as follows. Binds 23S rRNA and is also seen to make contacts with the A and possibly P site tRNAs. The polypeptide is Large ribosomal subunit protein uL16 (Chlamydia felis (strain Fe/C-56) (Chlamydophila felis)).